A 225-amino-acid polypeptide reads, in one-letter code: ATP synthase F(0) complex subunit a (225 aa).

6 consecutive transmembrane segments (helical) span residues 10–30, 69–89, 96–116, 135–155, 168–188, and 194–214; these read PSLLGISLLMPALLMTTILLL, LILISLLILLSLTNLLGLLPY, QLSMNMAIALPLWLVTVLIGL, LLIPILILIETISLLIRPIAL, LLIQLISIATLNLWFMMPPLS, and VLILLLLLEFAVAMIQAYVFV.

The protein belongs to the ATPase A chain family. Component of the ATP synthase complex composed at least of ATP5F1A/subunit alpha, ATP5F1B/subunit beta, ATP5MC1/subunit c (homooctomer), MT-ATP6/subunit a, MT-ATP8/subunit 8, ATP5ME/subunit e, ATP5MF/subunit f, ATP5MG/subunit g, ATP5MK/subunit k, ATP5MJ/subunit j, ATP5F1C/subunit gamma, ATP5F1D/subunit delta, ATP5F1E/subunit epsilon, ATP5PF/subunit F6, ATP5PB/subunit b, ATP5PD/subunit d, ATP5PO/subunit OSCP. ATP synthase complex consists of a soluble F(1) head domain (subunits alpha(3) and beta(3)) - the catalytic core - and a membrane F(0) domain - the membrane proton channel (subunits c, a, 8, e, f, g, k and j). These two domains are linked by a central stalk (subunits gamma, delta, and epsilon) rotating inside the F1 region and a stationary peripheral stalk (subunits F6, b, d, and OSCP). Interacts with DNAJC30; interaction is direct.

It is found in the mitochondrion inner membrane. The catalysed reaction is H(+)(in) = H(+)(out). Functionally, subunit a, of the mitochondrial membrane ATP synthase complex (F(1)F(0) ATP synthase or Complex V) that produces ATP from ADP in the presence of a proton gradient across the membrane which is generated by electron transport complexes of the respiratory chain. ATP synthase complex consist of a soluble F(1) head domain - the catalytic core - and a membrane F(1) domain - the membrane proton channel. These two domains are linked by a central stalk rotating inside the F(1) region and a stationary peripheral stalk. During catalysis, ATP synthesis in the catalytic domain of F(1) is coupled via a rotary mechanism of the central stalk subunits to proton translocation. With the subunit c (ATP5MC1), forms the proton-conducting channel in the F(0) domain, that contains two crucial half-channels (inlet and outlet) that facilitate proton movement from the mitochondrial intermembrane space (IMS) into the matrix. Protons are taken up via the inlet half-channel and released through the outlet half-channel, following a Grotthuss mechanism. This is ATP synthase F(0) complex subunit a from Alligator mississippiensis (American alligator).